Here is a 400-residue protein sequence, read N- to C-terminus: S-adenosylmethionine decarboxylase proenzyme (400 aa).

Active-site residues include Glu-18 and Glu-21. Ser-78 serves as the catalytic Schiff-base intermediate with substrate; via pyruvic acid. Position 78 is a pyruvic acid (Ser); by autocatalysis (Ser-78). The Proton donor; for catalytic activity role is filled by Cys-92. Residues Ser-243 and His-256 each act as proton acceptor; for processing activity in the active site.

Belongs to the eukaryotic AdoMetDC family. Requires pyruvate as cofactor. In terms of processing, is synthesized initially as an inactive proenzyme. Formation of the active enzyme involves a self-maturation process in which the active site pyruvoyl group is generated from an internal serine residue via an autocatalytic post-translational modification. Two non-identical subunits are generated from the proenzyme in this reaction, and the pyruvate is formed at the N-terminus of the alpha chain, which is derived from the carboxyl end of the proenzyme. The post-translation cleavage follows an unusual pathway, termed non-hydrolytic serinolysis, in which the side chain hydroxyl group of the serine supplies its oxygen atom to form the C-terminus of the beta chain, while the remainder of the serine residue undergoes an oxidative deamination to produce ammonia and the pyruvoyl group blocking the N-terminus of the alpha chain.

It carries out the reaction S-adenosyl-L-methionine + H(+) = S-adenosyl 3-(methylsulfanyl)propylamine + CO2. It participates in amine and polyamine biosynthesis; S-adenosylmethioninamine biosynthesis; S-adenosylmethioninamine from S-adenosyl-L-methionine: step 1/1. The sequence is that of S-adenosylmethionine decarboxylase proenzyme (SAMDC) from Zea mays (Maize).